The primary structure comprises 618 residues: Manganese lipoxygenase (618 aa).

The N-terminal stretch at methionine 1–alanine 16 is a signal peptide. Residues serine 36 to threonine 45 are compositionally biased toward low complexity. The disordered stretch occupies residues serine 36–alanine 58. Positions glutamine 46–alanine 58 are enriched in polar residues. The Lipoxygenase domain occupies tyrosine 47–valine 618. Residues asparagine 60, asparagine 91, asparagine 106, asparagine 116, and asparagine 157 are each glycosylated (N-linked (GlcNAc...) asparagine). Mn(2+)-binding residues include histidine 290, histidine 294, histidine 478, and asparagine 482. Residue asparagine 513 is glycosylated (N-linked (GlcNAc...) asparagine). Mn(2+) is bound at residue valine 618.

This sequence belongs to the lipoxygenase family. Manganese lipoxygenase subfamily. It depends on Mn(2+) as a cofactor. Post-translationally, N- and O-glycosylated.

The protein resides in the secreted. It catalyses the reaction (9Z,12Z)-octadecadienoate + O2 = (11S)-hydroperoxy-(9Z,12Z)-octadecadienoate. The catalysed reaction is (9Z,12Z)-octadecadienoate + O2 = (13R)-hydroperoxy-(9Z,11E)-octadecadienoate. The enzyme catalyses (9Z,12Z,15Z)-octadecatrienoate + O2 = (11S)-hydroperoxy-(9Z,12Z,15Z)-octadecatrienoate. It carries out the reaction (9Z,12Z,15Z)-octadecatrienoate + O2 = (13R)-hydroperoxy-(9Z,11E,15Z)-octadecatrienoate. Lipoxygenase that metabolizes linoleic and alpha-linolenic acids to 11S- and 13R-hydroperoxy fatty acids. At the end of lipoxygenation, the intermediate product 11S-HPODE from linoleic acid is then transformed into 13R-HPODE as the final product. It also acts on alpha-linolenic acid producing 11S-HPOTrE and 13R-HPOTrE with subsequent transformation of 11S-HPOTrE to 13R-HPOTrE as final product. The chain is Manganese lipoxygenase from Gaeumannomyces avenae (Oat take-all root rot fungus).